Consider the following 85-residue polypeptide: uncharacterized protein (85 aa).

It to A.fulgidus AF_0255 and AF_1363.

This is an uncharacterized protein from Archaeoglobus fulgidus (strain ATCC 49558 / DSM 4304 / JCM 9628 / NBRC 100126 / VC-16).